Reading from the N-terminus, the 490-residue chain is Betaine aldehyde dehydrogenase (490 aa).

I27 and D93 together coordinate K(+). Position 150 to 152 (150 to 152 (GAW)) interacts with NAD(+). K162 functions as the Charge relay system in the catalytic mechanism. 176 to 179 (KPSE) is a binding site for NAD(+). Residue V180 participates in K(+) binding. Position 230–233 (230–233 (GTDT)) interacts with NAD(+). L246 is a binding site for K(+). Residue E252 is the Proton acceptor of the active site. NAD(+)-binding residues include G254, C286, and E387. The Nucleophile role is filled by C286. A Cysteine sulfenic acid (-SOH) modification is found at C286. The K(+) site is built by K457 and G460. The active-site Charge relay system is E464.

The protein belongs to the aldehyde dehydrogenase family. In terms of assembly, dimer of dimers. Requires K(+) as cofactor.

The enzyme catalyses betaine aldehyde + NAD(+) + H2O = glycine betaine + NADH + 2 H(+). It participates in amine and polyamine biosynthesis; betaine biosynthesis via choline pathway; betaine from betaine aldehyde: step 1/1. Involved in the biosynthesis of the osmoprotectant glycine betaine. Catalyzes the irreversible oxidation of betaine aldehyde to the corresponding acid. This chain is Betaine aldehyde dehydrogenase, found in Pseudomonas syringae pv. syringae (strain B728a).